Consider the following 72-residue polypeptide: SRY-related protein AES1 (72 aa).

Residues 1-69 (VKRPMNAFMV…KHMADYPDYK (69 aa)) constitute a DNA-binding region (HMG box).

It is found in the nucleus. In Alligator mississippiensis (American alligator), this protein is SRY-related protein AES1.